The primary structure comprises 500 residues: Protein dcd1B (500 aa).

A signal peptide spans 1 to 20 (MNLIKLFIICCLLISITVKS). N284, N331, N441, N459, N474, and N475 each carry an N-linked (GlcNAc...) asparagine glycan. Positions 464–500 (FSEQPPLPPPNNSSSSDSNSNSNSDSSSSSDSNSNSN) are disordered. A compositionally biased stretch (low complexity) spans 475–500 (NSSSSDSNSNSNSDSSSSSDSNSNSN).

The protein resides in the secreted. The protein is Protein dcd1B (dcd1B) of Dictyostelium discoideum (Social amoeba).